A 1203-amino-acid chain; its full sequence is DNA-directed RNA polymerase I subunit RPA135 (1203 aa).

S2 is subject to N-acetylserine. S81 carries the post-translational modification Phosphoserine. The segment at 1104 to 1131 (CRECGSILTTQQSVPRIGSISTVCCRRC) adopts a C4-type zinc-finger fold. S1156 is subject to Phosphoserine.

This sequence belongs to the RNA polymerase beta chain family. As to quaternary structure, component of the RNA polymerase I (Pol I) complex consisting of 14 subunits: RPA135, RPA190, RPC40, RPA14, RPB5, RPO26, RPA43, RPB8, RPA12, RPB10, RPC19, RPC10, RPA49 and RPA34. The complex is composed of a horseshoe-shaped core containing ten subunits (RPA135, RPA190, RPB5, RPO26, RPB8, RPB10, RPC10, RPA12, RPC19 and RPC40) where RPA135 and RPA190 form the DNA-binding cleft. Outside of the core, RPA14 and RPA43 form the stalk that mediates interactions with transcription initiation factors and newly synthesized RNA.

The protein localises to the nucleus. Its subcellular location is the nucleolus. The catalysed reaction is RNA(n) + a ribonucleoside 5'-triphosphate = RNA(n+1) + diphosphate. DNA-dependent RNA polymerases catalyze the transcription of DNA into RNA using the four ribonucleoside triphosphates as substrates. Component of RNA polymerase I (Pol I) which synthesizes ribosomal RNA precursors. Besides, RNA polymerase I has intrinsic RNA cleavage activity. RPA190 and RPA135 both contribute to the polymerase catalytic activity and together form the Pol I active center. In addition, subunit RPA12 contributes a catalytic zinc ribbon that is required for RNA cleavage by Pol I. A single stranded DNA template strand of the promoter is positioned within the central active site cleft of Pol I. A bridging helix emanates from RPA190 and crosses the cleft near the catalytic site and is thought to promote translocation of Pol I by acting as a ratchet that moves the RNA-DNA hybrid through the active site by switching from straight to bent conformations at each step of nucleotide addition. The polypeptide is DNA-directed RNA polymerase I subunit RPA135 (RPA135) (Saccharomyces cerevisiae (strain ATCC 204508 / S288c) (Baker's yeast)).